Here is a 219-residue protein sequence, read N- to C-terminus: Arginine transport system permease protein ArtQ (219 aa).

A run of 5 helical transmembrane segments spans residues 19 to 39, 51 to 73, 88 to 108, 149 to 169, and 187 to 207; these read LAITLKIVVVSAIIGLILGIV, FIWIADFYTSVFRGTPLVLQLMI, QFWAAVVALSLNSAAYVSEII, AIVNELITLTKESAIVTVIGL, and LEPLIIAGLIYYVLVLILTFI. The 190-residue stretch at 19–208 folds into the ABC transmembrane type-1 domain; sequence LAITLKIVVV…VLVLILTFIG (190 aa).

This sequence belongs to the binding-protein-dependent transport system permease family. HisMQ subfamily.

It is found in the cell membrane. Functionally, part of a binding-protein-dependent transport system for arginine. Probably responsible for the translocation of the substrate across the membrane. This is Arginine transport system permease protein ArtQ (artQ) from Bacillus subtilis (strain 168).